Here is a 360-residue protein sequence, read N- to C-terminus: Ribosomal RNA large subunit methyltransferase M (360 aa).

S-adenosyl-L-methionine is bound by residues Ser-187, 220–223 (CPGG), Asp-239, Asp-259, and Asp-276. The Proton acceptor role is filled by Lys-305.

This sequence belongs to the class I-like SAM-binding methyltransferase superfamily. RNA methyltransferase RlmE family. RlmM subfamily. Monomer.

It localises to the cytoplasm. The enzyme catalyses cytidine(2498) in 23S rRNA + S-adenosyl-L-methionine = 2'-O-methylcytidine(2498) in 23S rRNA + S-adenosyl-L-homocysteine + H(+). Catalyzes the 2'-O-methylation at nucleotide C2498 in 23S rRNA. This chain is Ribosomal RNA large subunit methyltransferase M, found in Shewanella pealeana (strain ATCC 700345 / ANG-SQ1).